The chain runs to 1719 residues: Cilia- and flagella-associated protein 43 (1719 aa).

Residues 94–120 (VREEGAGGGADKPSGSGAVSGKQQSSG) form a disordered region. 6 WD repeats span residues 122 to 165 (SVVL…GRCR), 174 to 214 (SSTS…EKAV), 226 to 263 (PAGA…PLQL), 308 to 345 (TSGA…AAAI), 413 to 452 (CHVG…LLGR), and 513 to 552 (LHSA…GRVR). Residues 569–596 (TWPRSDGGSGAASGHAQAGPVSTTSAEG) form a disordered region. 2 WD repeats span residues 697–736 (AHAR…LAAQ) and 749–788 (ITAG…AVAN). The disordered stretch occupies residues 1022 to 1045 (RAKQEAARKADEDAAKRSAKDNAG). A WD 9 repeat occupies 1073–1114 (PKPAWLVALGVEPDAVNPKLITEEQNRELKEWQAKEKSLQEE). Disordered stretches follow at residues 1220 to 1269 (MPGG…AAAA), 1277 to 1296 (ATAA…GAAG), and 1325 to 1372 (TLNP…AAAA). A compositionally biased stretch (gly residues) spans 1221–1233 (PGGGAIGAAGGHQ). Residues 1257–1269 (ASLAHSPSGAAAA) show a composition bias toward low complexity. Over residues 1344–1358 (SSALHPSHSHASVHG) the composition is skewed to low complexity. Coiled-coil stretches lie at residues 1524–1609 (AAQW…RSAQ) and 1651–1679 (HKKL…RLRT). A disordered region spans residues 1685–1719 (ESGAVAGMPSPPRRLPPDIKLLAGSPSSSSVAGRT). The span at 1709 to 1719 (SPSSSSVAGRT) shows a compositional bias: polar residues.

This sequence belongs to the CFAP43 family.

It is found in the cell projection. The protein localises to the cilium. The protein resides in the flagellum. Its subcellular location is the cytoplasm. It localises to the cytoskeleton. It is found in the flagellum axoneme. Functionally, flagellar protein involved in flagellum axoneme organization and function. This is Cilia- and flagella-associated protein 43 from Chlamydomonas reinhardtii (Chlamydomonas smithii).